Here is a 410-residue protein sequence, read N- to C-terminus: Neurotensin receptor type 2 (410 aa).

Residues 1–32 (METSSPRPPRPSSNPGLSLDARLGVDTRLWAK) lie on the Extracellular side of the membrane. Residues 33–55 (VLFTALYALIWALGAAGNALSAH) form a helical membrane-spanning segment. Residues 56 to 64 (VVLKARAGR) lie on the Cytoplasmic side of the membrane. The chain crosses the membrane as a helical span at residues 65-87 (AGRLRHHVLSLALAGLLLLLVGV). The Extracellular portion of the chain corresponds to 88-109 (PVELYSFVWFHYPWVFGDLGCR). Residues cysteine 108 and cysteine 194 are joined by a disulfide bond. Residues 110 to 131 (GYYFVHELCAYATVLSVAGLSA) traverse the membrane as a helical segment. The Cytoplasmic portion of the chain corresponds to 132-154 (ERCLAVCQPLRARSLLTPRRTRW). The chain crosses the membrane as a helical span at residues 155 to 176 (LVALSWAASLGLALPMAVIMGQ). At 177–217 (KHELETADGEPEPASRVCTVLVSRTALQVFIQVNVLVSFVL) the chain is on the extracellular side. A helical transmembrane segment spans residues 218–237 (PLALTAFLNGVTVSHLLALC). Topologically, residues 238–297 (SQVPSTSTPGSSTPSRLELLSEEGLLSFIVWKKTFIQGGQVSLVRHKDVRRIRSLQRSVQ) are cytoplasmic. The chain crosses the membrane as a helical span at residues 298-318 (VLRAIVVMYVICWLPYHARRL). At 319–337 (MYCYVPDDAWTDPLYNFYH) the chain is on the extracellular side. Residues 338 to 358 (YFYMVTNTLFYVSSAVTPLLY) form a helical membrane-spanning segment. Over 359–410 (NAVSSSFRKLFLEAVSSLCGEHHPMKRLPPKPQSPTLMDTASGFGDPPETRT) the chain is Cytoplasmic. Cysteine 377 is lipidated: S-palmitoyl cysteine. The disordered stretch occupies residues 381–410 (HPMKRLPPKPQSPTLMDTASGFGDPPETRT).

The protein belongs to the G-protein coupled receptor 1 family. Neurotensin receptor subfamily. NTSR2 sub-subfamily. In terms of tissue distribution, expressed in prostate (at protein level).

Its subcellular location is the cell membrane. In terms of biological role, receptor for the tridecapeptide neurotensin. It is associated with G proteins that activate a phosphatidylinositol-calcium second messenger system. The sequence is that of Neurotensin receptor type 2 (NTSR2) from Homo sapiens (Human).